A 534-amino-acid polypeptide reads, in one-letter code: Probable DNA ligase (534 aa).

ATP is bound at residue Glu-213. Lys-215 acts as the N6-AMP-lysine intermediate in catalysis. Positions 220, 235, 264, 303, 375, and 381 each coordinate ATP.

Belongs to the ATP-dependent DNA ligase family. Requires Mg(2+) as cofactor.

The enzyme catalyses ATP + (deoxyribonucleotide)n-3'-hydroxyl + 5'-phospho-(deoxyribonucleotide)m = (deoxyribonucleotide)n+m + AMP + diphosphate.. Functionally, DNA ligase that seals nicks in double-stranded DNA during DNA replication, DNA recombination and DNA repair. The sequence is that of Probable DNA ligase from Mycolicibacterium vanbaalenii (strain DSM 7251 / JCM 13017 / BCRC 16820 / KCTC 9966 / NRRL B-24157 / PYR-1) (Mycobacterium vanbaalenii).